A 296-amino-acid chain; its full sequence is Tyrosine recombinase XerC (296 aa).

Residues 2-85 (ADQASWLERF…ALKQFGQFLL (84 aa)) form the Core-binding (CB) domain. Positions 106–285 (TLPKNLDPDS…DFQHLAKVYD (180 aa)) constitute a Tyr recombinase domain. Catalysis depends on residues R145, K169, H237, R240, and H263. Y272 functions as the O-(3'-phospho-DNA)-tyrosine intermediate in the catalytic mechanism.

The protein belongs to the 'phage' integrase family. XerC subfamily. As to quaternary structure, forms a cyclic heterotetrameric complex composed of two molecules of XerC and two molecules of XerD.

The protein resides in the cytoplasm. Functionally, site-specific tyrosine recombinase, which acts by catalyzing the cutting and rejoining of the recombining DNA molecules. The XerC-XerD complex is essential to convert dimers of the bacterial chromosome into monomers to permit their segregation at cell division. It also contributes to the segregational stability of plasmids. The polypeptide is Tyrosine recombinase XerC (Shewanella amazonensis (strain ATCC BAA-1098 / SB2B)).